A 687-amino-acid chain; its full sequence is Outer dynein arm-docking complex subunit 1 (687 aa).

Coiled-coil stretches lie at residues 100–193 (QVRV…YLNV), 222–267 (REEA…LKLK), and 341–421 (INEQ…LFTR). The disordered stretch occupies residues 126–147 (SRNSAHSKNARSPGCVQHDKVK). 3 disordered regions span residues 363–388 (VSGR…QRVD), 487–511 (FPKK…AKDD), and 540–687 (ESTP…QSNY). A compositionally biased stretch (basic and acidic residues) spans 366-388 (RRSEEDRRAQQEQQRAELQQRVD). The span at 544-556 (SMTSSTQKVSSSS) shows a compositional bias: low complexity. Polar residues-rich tracts occupy residues 557 to 611 (RLVT…SSRG) and 620 to 629 (RSPNSSSYLG). A compositionally biased stretch (low complexity) spans 660-680 (SPGPASSPGPASSTGQASSTS).

It belongs to the ODA1/DCC2 family. Component of the outer dynein arm-docking complex along with ODAD2, ODAD3, ODAD4 and CLXN. Interacts with ODAD3. Interacts with ODAD4; this interaction may facilitate the recruitment and/or attachment of outer dynein arm docking complex proteins, including ODAD1, ODAD3, and ODAD4 to ciliary axonemes. Interacts with DNAH9. Interacts with MNS1. Interacts with PIERCE1 and PIERCE2; the interactions link the outer dynein arms docking complex (ODA-DC) to the internal microtubule inner proteins (MIP) in cilium axoneme. As to expression, expressed in trachea multiciliated cells.

It localises to the cytoplasm. The protein localises to the cytoskeleton. Its subcellular location is the cilium axoneme. Its function is as follows. Component of the outer dynein arm-docking complex (ODA-DC) that mediates outer dynein arms (ODA) binding onto the doublet microtubule. Involved in mediating assembly of both ODAs and their axonemal docking complex onto ciliary microtubules. In Bos taurus (Bovine), this protein is Outer dynein arm-docking complex subunit 1 (ODAD1).